The chain runs to 414 residues: Histidine--tRNA ligase (414 aa).

The protein belongs to the class-II aminoacyl-tRNA synthetase family. In terms of assembly, homodimer.

The protein resides in the cytoplasm. The enzyme catalyses tRNA(His) + L-histidine + ATP = L-histidyl-tRNA(His) + AMP + diphosphate + H(+). The protein is Histidine--tRNA ligase of Ehrlichia ruminantium (strain Gardel).